The sequence spans 277 residues: MDIVLLIKAAIMGLVEGLTEFLPISSTGHLILAGTLLGFDNEVGKVFDIAIQTGAIFAVILVYWQKIRDTLVALPTEKQAQRFSLNVLIAFVPAVVLGLLFGKAIKAHLFTPVVVASTFIIGGFIILWAERRQEKNPAAVRIHDVESMTPMDALKVGLAQCLAMIPGTSRSGATIIGGMLLGLSRKAATDFSFYLAIPTLIGAGVYSLFKERALLSMADLPTFAVGLVVSFFSAWLCIRWLLRYIASHSFVGFAYYRIVFGVVVLATAWSGAVTWAA.

7 consecutive transmembrane segments (helical) span residues 3–23 (IVLL…EFLP), 43–63 (VGKV…ILVY), 85–105 (LNVL…GKAI), 109–129 (LFTP…ILWA), 189–209 (TDFS…YSLF), 218–238 (ADLP…WLCI), and 249–269 (SFVG…ATAW).

It belongs to the UppP family.

The protein localises to the cell inner membrane. It carries out the reaction di-trans,octa-cis-undecaprenyl diphosphate + H2O = di-trans,octa-cis-undecaprenyl phosphate + phosphate + H(+). Functionally, catalyzes the dephosphorylation of undecaprenyl diphosphate (UPP). Confers resistance to bacitracin. The protein is Undecaprenyl-diphosphatase of Albidiferax ferrireducens (strain ATCC BAA-621 / DSM 15236 / T118) (Rhodoferax ferrireducens).